Reading from the N-terminus, the 114-residue chain is Protein D2 (114 aa).

It belongs to the phosphatidylethanolamine-binding protein family.

The protein is Protein D2 (D2) of Onchocerca volvulus.